A 498-amino-acid polypeptide reads, in one-letter code: MASFRGSIWYCIFVLSLIAVAISAAESEEEQSSVLTLDSTNFTDTISKHDFIVVEFYAPWCGHCKKLRPEYEKAASILKSHDIPVVLAKVDANEEANKELATQYDIKGFPTLKILRNGGKSIQEYKGPREADGIAEYLKKQSGPASVEIKSTEAANTFIGDKKIFIVGVFPKFSGEEYENYMSVADKLRSDYEFGHTLDAKHLPQGESSVTGPVVRLFKPFDELFVDFKDFNVDALEKFVEESSMPVVTVFNSDPSNHPFVIKFFNSPDAKAMLFMNFNGEAADSIKSKYQEVAHQFKGEGIILLLGDVEASQGAFQYFGLKEDQVPLIIIQTNDGQKYLKANLEPDHIAPWVKAYKEGKVQAYRKSEPIPEVNNEPVKVVVADTLQDIVFNSGKNVLLEFYAPWCGHCKQLAPILDEVAVSYKSDADIVIAKLDATANDIPSDTFDVRGYPTVYFRSASGKVEQYDGDRTKDDIISFIEKNRDKAAQQESANGKDEL.

The first 23 residues, 1–23, serve as a signal peptide directing secretion; it reads MASFRGSIWYCIFVLSLIAVAIS. 2 Thioredoxin domains span residues 24–143 and 339–484; these read AAES…KQSG and YLKA…KNRD. A glycan (N-linked (GlcNAc...) asparagine) is linked at Asn41. Catalysis depends on nucleophile residues Cys61, Cys64, Cys406, and Cys409. 2 disulfides stabilise this stretch: Cys61–Cys64 and Cys406–Cys409. The Prevents secretion from ER motif lies at 495–498; it reads KDEL.

It belongs to the protein disulfide isomerase family.

The protein localises to the endoplasmic reticulum lumen. It carries out the reaction Catalyzes the rearrangement of -S-S- bonds in proteins.. In terms of biological role, participates in the folding of proteins containing disulfide bonds, may be involved in glycosylation, prolyl hydroxylation and triglyceride transfer. The sequence is that of Protein disulfide-isomerase from Ricinus communis (Castor bean).